Here is a 74-residue protein sequence, read N- to C-terminus: MRFFATFFLLAMLVVATKMGPMRIAEARHCESLSHRFKGPCTRDSNCASVCETERFSGGNCHGFRRRCFCTKPC.

An N-terminal signal peptide occupies residues 1–19 (MRFFATFFLLAMLVVATKM). 4 cysteine pairs are disulfide-bonded: Cys-30–Cys-74, Cys-41–Cys-61, Cys-47–Cys-68, and Cys-51–Cys-70.

It belongs to the DEFL family. Protease inhibitor I18 (RTI/MTI-2) subfamily. As to expression, tuber.

The protein localises to the secreted. The protein is Defensin-like protein P322 of Solanum tuberosum (Potato).